The following is a 348-amino-acid chain: Uroporphyrinogen decarboxylase (348 aa).

Residues 28-32 (RQAGR), D78, Y154, T209, and H325 each bind substrate.

It belongs to the uroporphyrinogen decarboxylase family. Homodimer.

Its subcellular location is the cytoplasm. The enzyme catalyses uroporphyrinogen III + 4 H(+) = coproporphyrinogen III + 4 CO2. It functions in the pathway porphyrin-containing compound metabolism; protoporphyrin-IX biosynthesis; coproporphyrinogen-III from 5-aminolevulinate: step 4/4. In terms of biological role, catalyzes the decarboxylation of four acetate groups of uroporphyrinogen-III to yield coproporphyrinogen-III. The protein is Uroporphyrinogen decarboxylase of Rhodopseudomonas palustris (strain HaA2).